The sequence spans 401 residues: Elongation factor Tu 2 (401 aa).

The tr-type G domain occupies 10–209 (KPHVNVGTIG…AVDEYIPTPV (200 aa)). Positions 19-26 (GHVDHGKT) are G1. 19–26 (GHVDHGKT) lines the GTP pocket. Thr-26 contributes to the Mg(2+) binding site. The segment at 60 to 64 (GITIA) is G2. Residues 81–84 (DCPG) are G3. GTP-binding positions include 81–85 (DCPGH) and 136–139 (NKVD). A G4 region spans residues 136-139 (NKVD). The G5 stretch occupies residues 174-176 (SAL).

The protein belongs to the TRAFAC class translation factor GTPase superfamily. Classic translation factor GTPase family. EF-Tu/EF-1A subfamily. In terms of assembly, monomer.

Its subcellular location is the cytoplasm. It carries out the reaction GTP + H2O = GDP + phosphate + H(+). Its function is as follows. GTP hydrolase that promotes the GTP-dependent binding of aminoacyl-tRNA to the A-site of ribosomes during protein biosynthesis. This is Elongation factor Tu 2 from Roseiflexus sp. (strain RS-1).